The primary structure comprises 425 residues: Serine--tRNA ligase 2 (425 aa).

L-serine is bound at residue 234 to 236; sequence TAE. An ATP-binding site is contributed by 265–267; that stretch reads RVE. E288 serves as a coordination point for L-serine. 352 to 355 contributes to the ATP binding site; that stretch reads EVSS. L-serine is bound at residue S388.

The protein belongs to the class-II aminoacyl-tRNA synthetase family. Type-1 seryl-tRNA synthetase subfamily. As to quaternary structure, homodimer. The tRNA molecule binds across the dimer.

Its subcellular location is the cytoplasm. The enzyme catalyses tRNA(Ser) + L-serine + ATP = L-seryl-tRNA(Ser) + AMP + diphosphate + H(+). The catalysed reaction is tRNA(Sec) + L-serine + ATP = L-seryl-tRNA(Sec) + AMP + diphosphate + H(+). The protein operates within aminoacyl-tRNA biosynthesis; selenocysteinyl-tRNA(Sec) biosynthesis; L-seryl-tRNA(Sec) from L-serine and tRNA(Sec): step 1/1. Its function is as follows. Catalyzes the attachment of serine to tRNA(Ser). Is also able to aminoacylate tRNA(Sec) with serine, to form the misacylated tRNA L-seryl-tRNA(Sec), which will be further converted into selenocysteinyl-tRNA(Sec). The chain is Serine--tRNA ligase 2 from Clostridium acetobutylicum (strain ATCC 824 / DSM 792 / JCM 1419 / IAM 19013 / LMG 5710 / NBRC 13948 / NRRL B-527 / VKM B-1787 / 2291 / W).